The primary structure comprises 62 residues: Sperm protamine P1 (62 aa).

A disordered region spans residues 1–62 (MARYRHSRSR…RYSRRRRRRY (62 aa)).

The protein belongs to the protamine P1 family. As to expression, testis.

It localises to the nucleus. The protein resides in the chromosome. In terms of biological role, protamines substitute for histones in the chromatin of sperm during the haploid phase of spermatogenesis. They compact sperm DNA into a highly condensed, stable and inactive complex. This is Sperm protamine P1 (PRM1) from Wallabia bicolor (Swamp wallaby).